The following is a 427-amino-acid chain: Enolase (427 aa).

A (2R)-2-phosphoglycerate-binding site is contributed by Q163. Residue E205 is the Proton donor of the active site. Positions 242, 288, and 315 each coordinate Mg(2+). Residues K340, R369, S370, and K391 each contribute to the (2R)-2-phosphoglycerate site. K340 serves as the catalytic Proton acceptor.

Belongs to the enolase family. The cofactor is Mg(2+).

The protein resides in the cytoplasm. It localises to the secreted. It is found in the cell surface. It catalyses the reaction (2R)-2-phosphoglycerate = phosphoenolpyruvate + H2O. Its pathway is carbohydrate degradation; glycolysis; pyruvate from D-glyceraldehyde 3-phosphate: step 4/5. Catalyzes the reversible conversion of 2-phosphoglycerate (2-PG) into phosphoenolpyruvate (PEP). It is essential for the degradation of carbohydrates via glycolysis. This Amoebophilus asiaticus (strain 5a2) protein is Enolase.